The chain runs to 217 residues: NAD(P)H-quinone oxidoreductase subunit M, chloroplastic (217 aa).

The N-terminal 21 residues, 1 to 21 (MVAAFSYTACTKLSLLHPSMV), are a transit peptide targeting the chloroplast. The segment at 48–67 (ETETLKEEQSTEKMKKQPTP) is disordered. A compositionally biased stretch (basic and acidic residues) spans 50–62 (ETLKEEQSTEKMK).

The protein belongs to the NDH complex subunit M family. As to quaternary structure, part of the chloroplast NDH complex, composed of a mixture of chloroplast and nucleus encoded subunits. Component of the NDH subcomplex A, at least composed of ndhH, ndhI, ndhJ, ndhK, ndhL, ndhM, ndhN and ndhO.

The protein resides in the plastid. It is found in the chloroplast thylakoid membrane. It carries out the reaction a plastoquinone + NADH + (n+1) H(+)(in) = a plastoquinol + NAD(+) + n H(+)(out). It catalyses the reaction a plastoquinone + NADPH + (n+1) H(+)(in) = a plastoquinol + NADP(+) + n H(+)(out). NDH shuttles electrons from NAD(P)H:plastoquinone, via FMN and iron-sulfur (Fe-S) centers, to quinones in the photosynthetic chain and possibly in a chloroplast respiratory chain. The immediate electron acceptor for the enzyme in this species is believed to be plastoquinone. Couples the redox reaction to proton translocation, and thus conserves the redox energy in a proton gradient. This chain is NAD(P)H-quinone oxidoreductase subunit M, chloroplastic, found in Arabidopsis thaliana (Mouse-ear cress).